Consider the following 211-residue polypeptide: Thiamine-phosphate synthase (211 aa).

4-amino-2-methyl-5-(diphosphooxymethyl)pyrimidine is bound by residues 36-40 and Asn68; that span reads QLRDK. Mg(2+) contacts are provided by Asp69 and Asp88. Residue Ser107 coordinates 4-amino-2-methyl-5-(diphosphooxymethyl)pyrimidine. 2-[(2R,5Z)-2-carboxy-4-methylthiazol-5(2H)-ylidene]ethyl phosphate is bound at residue 133-135; the sequence is TKS. Residue Lys136 participates in 4-amino-2-methyl-5-(diphosphooxymethyl)pyrimidine binding. 2-[(2R,5Z)-2-carboxy-4-methylthiazol-5(2H)-ylidene]ethyl phosphate is bound by residues Gly164 and 184 to 185; that span reads IS.

Belongs to the thiamine-phosphate synthase family. Requires Mg(2+) as cofactor.

It carries out the reaction 2-[(2R,5Z)-2-carboxy-4-methylthiazol-5(2H)-ylidene]ethyl phosphate + 4-amino-2-methyl-5-(diphosphooxymethyl)pyrimidine + 2 H(+) = thiamine phosphate + CO2 + diphosphate. The enzyme catalyses 2-(2-carboxy-4-methylthiazol-5-yl)ethyl phosphate + 4-amino-2-methyl-5-(diphosphooxymethyl)pyrimidine + 2 H(+) = thiamine phosphate + CO2 + diphosphate. The catalysed reaction is 4-methyl-5-(2-phosphooxyethyl)-thiazole + 4-amino-2-methyl-5-(diphosphooxymethyl)pyrimidine + H(+) = thiamine phosphate + diphosphate. Its pathway is cofactor biosynthesis; thiamine diphosphate biosynthesis; thiamine phosphate from 4-amino-2-methyl-5-diphosphomethylpyrimidine and 4-methyl-5-(2-phosphoethyl)-thiazole: step 1/1. Functionally, condenses 4-methyl-5-(beta-hydroxyethyl)thiazole monophosphate (THZ-P) and 2-methyl-4-amino-5-hydroxymethyl pyrimidine pyrophosphate (HMP-PP) to form thiamine monophosphate (TMP). The polypeptide is Thiamine-phosphate synthase (Halalkalibacterium halodurans (strain ATCC BAA-125 / DSM 18197 / FERM 7344 / JCM 9153 / C-125) (Bacillus halodurans)).